We begin with the raw amino-acid sequence, 183 residues long: Potassium-transporting ATPase KdpC subunit (183 aa).

Residues 11-31 traverse the membrane as a helical segment; it reads LALLMTLLTGVLYPLAVTGVA.

This sequence belongs to the KdpC family. In terms of assembly, the system is composed of three essential subunits: KdpA, KdpB and KdpC.

Its subcellular location is the cell inner membrane. Functionally, part of the high-affinity ATP-driven potassium transport (or Kdp) system, which catalyzes the hydrolysis of ATP coupled with the electrogenic transport of potassium into the cytoplasm. This subunit acts as a catalytic chaperone that increases the ATP-binding affinity of the ATP-hydrolyzing subunit KdpB by the formation of a transient KdpB/KdpC/ATP ternary complex. The chain is Potassium-transporting ATPase KdpC subunit from Pseudomonas putida (strain GB-1).